Reading from the N-terminus, the 174-residue chain is Extracellular cysteine protease (174 aa).

Catalysis depends on residues Cys-24, His-120, and Asn-141.

This sequence belongs to the peptidase C47 family. Post-translationally, proteolytically cleaved.

The protein resides in the secreted. The protein localises to the cell wall. Its activity is regulated as follows. Inhibited by heavy metal ions such as Zn(2+) or Ni(2+), iodoacetamide, N-ethylmaleimide, leupeptin, SDS and E-64. Also inhibited by chloromethylketones TPCK and TLCK and by human plasma inhibitor alpha-2-macroglobulin. Stimulated by L-cysteine. Functionally, cysteine protease able to cleave elastin, insulin, myoglobin, fibronectin, fibrinogen, HMW-kininogen, alpha-1-protease inhibitor and alpha-1-antitrypsin. Along with other extracellular proteases may contribute to the colonization and infection of human tissues. This Staphylococcus epidermidis protein is Extracellular cysteine protease (ecpA).